The sequence spans 144 residues: Large ribosomal subunit protein uL15 (144 aa).

The segment at 1-53 (MRLNTLSPAEGAKHSAKRLGRGIGSGLGKTGGRGHKGQKSRTGGGVRRGFEGG) is disordered. Residues 21 to 31 (RGIGSGLGKTG) are compositionally biased toward gly residues.

It belongs to the universal ribosomal protein uL15 family. As to quaternary structure, part of the 50S ribosomal subunit.

Its function is as follows. Binds to the 23S rRNA. The polypeptide is Large ribosomal subunit protein uL15 (Pasteurella multocida (strain Pm70)).